The following is a 417-amino-acid chain: Probable glucuronosyltransferase Os01g0926700 (417 aa).

The Cytoplasmic portion of the chain corresponds to 1–3; sequence MRR. Residues 4-24 form a helical; Signal-anchor for type II membrane protein membrane-spanning segment; it reads WVLAIAILAAAVCFFLGAQAQ. Residues 25–417 lie on the Lumenal side of the membrane; it reads EVRQGHQTER…AGPVGDLKPW (393 aa). N-linked (GlcNAc...) asparagine glycosylation is found at N144 and N405.

Belongs to the glycosyltransferase 47 family.

It is found in the golgi apparatus membrane. Involved in the synthesis of glucuronoxylan hemicellulose in secondary cell walls. In Oryza sativa subsp. japonica (Rice), this protein is Probable glucuronosyltransferase Os01g0926700.